The chain runs to 124 residues: NADH dehydrogenase [ubiquinone] iron-sulfur protein 6, mitochondrial (124 aa).

The transit peptide at 1–28 (MAAAMTFCRLLNRCGEAARSLPLGARCF) directs the protein to the mitochondrion. At Lys-98 the chain carries N6-acetyllysine.

The protein belongs to the complex I NDUFS6 subunit family. Mammalian complex I is composed of 45 different subunits. This is a component of the iron-sulfur (IP) fragment of the enzyme.

The protein resides in the mitochondrion inner membrane. Its function is as follows. Accessory subunit of the mitochondrial membrane respiratory chain NADH dehydrogenase (Complex I), that is believed not to be involved in catalysis. Complex I functions in the transfer of electrons from NADH to the respiratory chain. The immediate electron acceptor for the enzyme is believed to be ubiquinone. This is NADH dehydrogenase [ubiquinone] iron-sulfur protein 6, mitochondrial (NDUFS6) from Gorilla gorilla gorilla (Western lowland gorilla).